The sequence spans 319 residues: Glycine--tRNA ligase alpha subunit (319 aa).

Residues 290-319 form a disordered region; the sequence is RQQQPEAPAPGPAAVVGGRDRKDACDVKEG. Residues 307–319 show a composition bias toward basic and acidic residues; the sequence is GRDRKDACDVKEG.

Belongs to the class-II aminoacyl-tRNA synthetase family. In terms of assembly, tetramer of two alpha and two beta subunits.

The protein localises to the cytoplasm. The catalysed reaction is tRNA(Gly) + glycine + ATP = glycyl-tRNA(Gly) + AMP + diphosphate. The protein is Glycine--tRNA ligase alpha subunit of Moorella thermoacetica (strain ATCC 39073 / JCM 9320).